The sequence spans 693 residues: Polyribonucleotide nucleotidyltransferase (693 aa).

The Mg(2+) site is built by D489 and D495. One can recognise a KH domain in the interval 556–615 (PQIHVMNINPAKIKDVVGRGGATVKGIVEKTGAQIDTSDSGEVKVFAKDKKSMDMAVAMI). In terms of domain architecture, S1 motif spans 625–693 (GQVYKGKIVK…GRVKLSLVAR (69 aa)).

This sequence belongs to the polyribonucleotide nucleotidyltransferase family. In terms of assembly, component of the RNA degradosome, which is a multiprotein complex involved in RNA processing and mRNA degradation. Mg(2+) serves as cofactor.

The protein resides in the cytoplasm. It catalyses the reaction RNA(n+1) + phosphate = RNA(n) + a ribonucleoside 5'-diphosphate. Involved in mRNA degradation. Catalyzes the phosphorolysis of single-stranded polyribonucleotides processively in the 3'- to 5'-direction. The protein is Polyribonucleotide nucleotidyltransferase of Francisella tularensis subsp. holarctica (strain FTNF002-00 / FTA).